Consider the following 112-residue polypeptide: MVAAKKTKKTHESINNRLALVMKSGKYTLGYKTVLKSLRSSKGKLIIIANNCPPLRKSEIEYYAMLAKVGVHHYNGNNVDLGTACGKYYRVCCLSIVDPGDSDIIKTLPGDQ.

Belongs to the eukaryotic ribosomal protein eL30 family.

The polypeptide is Large ribosomal subunit protein eL30 (RPL30) (Lupinus luteus (European yellow lupine)).